The following is a 972-amino-acid chain: MPFTLGQRWISDTESDLGLGTVVAEDKRTVSIMFSACEESRLYARSDAPVTRVMFNVGDVVESHEGWSLEVKIVEENGGIFTYIGTRTDTEEENVKLREIFLSHQIRFNKPQDKLFAGQIDRMDRFALRYRALTNQYEQHKSPLRGLCGMRAGLIPHQLFIAHEVGRRYAPRVLLADEVGLGKTIEAGMIIHQQVLAGRAERILIVVPETLQHQWLVEMMRRFNLHFSIFDEERCVESLADATNPFETAQYVLCSLDFLRKSRRRFEQAQDADWDLLVVDEAHHLEWSEDKPSRQYQVVEALAEATPGVLLLTATPEQLGRESHFARLRLLDPDRFYDYDTFVEEERQYAPVAEAVTRLLSGEKIDDNARKTLVDLLSEQDIEPKLRLIESSDADDEHAQTVRHELIDSLMDRHGTGRVLFRNTRAAIKGFPERHLNMYPLELPSQYKTAMRVSSMMSGSISAEQKAIKLLYPEDIYQEFEGESATWWNFDPRVNWLLEMLKANRNEKVLVICSRAQTALTLEQALREREGIRATVFHEGMSIIDRDKAAAYFAQEDDGAQVLLCSEIGSEGRNFQFSNQLVMFDLPNNPDLLEQRIGRLDRIGQQRDIEIHVPHLEGTSQALLAHWYNEGLNSFEETCPTGRAVYEAVSDDLIALLACEKHEPEALENLIEKSAAMHHELKAKLDQGRDRLLEIHSNGGNAANDLVTQISSKDGDTNLIAFSLGLFDTIGLNQDDKGENAIVVTPSEHMMVASYPGLPYDGCTITFDRETALSREDLHFISWEHPMIQGGIDLLLSEGVGATAVSLLKNKALPAGTLLLEMVYVVDAQAPKSSGIGRFLPKTPIRILLDAKGNNLSNKVAFEGFNRQLSPVNRHLASKLVNSVQKEIHVLIAQAEQEVAKELVTVRESAQTEMENSLQAELTRLQALKAVNPNIRDDELELIESQIQDLTGYIGKAQIQLDSLRLIVVSHN.

The region spanning 164 to 334 (EVGRRYAPRV…FARLRLLDPD (171 aa)) is the Helicase ATP-binding domain. 177 to 184 (DEVGLGKT) contributes to the ATP binding site. Residues 280-283 (DEAH) carry the DEAH box motif. In terms of domain architecture, Helicase C-terminal spans 493–671 (RVNWLLEMLK…HEPEALENLI (179 aa)).

The protein belongs to the SNF2/RAD54 helicase family. RapA subfamily. Interacts with the RNAP. Has a higher affinity for the core RNAP than for the holoenzyme. Its ATPase activity is stimulated by binding to RNAP.

In terms of biological role, transcription regulator that activates transcription by stimulating RNA polymerase (RNAP) recycling in case of stress conditions such as supercoiled DNA or high salt concentrations. Probably acts by releasing the RNAP, when it is trapped or immobilized on tightly supercoiled DNA. Does not activate transcription on linear DNA. Probably not involved in DNA repair. This chain is RNA polymerase-associated protein RapA, found in Photobacterium profundum (strain SS9).